We begin with the raw amino-acid sequence, 200 residues long: Phospholipase A2 inhibitor gamma subunit B (200 aa).

The signal sequence occupies residues methionine 1 to cysteine 19. 8 disulfide bridges follow: cysteine 22-cysteine 46, cysteine 25-cysteine 32, cysteine 39-cysteine 67, cysteine 73-cysteine 94, cysteine 95-cysteine 100, cysteine 120-cysteine 145, cysteine 138-cysteine 165, and cysteine 171-cysteine 191. N-linked (GlcNAc...) asparagine glycosylation occurs at asparagine 31.

This sequence belongs to the CNF-like-inhibitor family. As to quaternary structure, heterodimer of subunit A and subunit B. Post-translationally, N-glycosylated. Expressed by the liver. Not expressed in esophagus, stomach, pancreas, spleen, gall bladder, small intestine, rectum, kidney, trachea, lung, testis and body fat.

Its subcellular location is the secreted. Inhibits the enzymatic activity of phospholipase A2 (PA2). The chain is Phospholipase A2 inhibitor gamma subunit B from Elaphe quadrivirgata (Japanese four-lined ratsnake).